The chain runs to 359 residues: MSSAQLRLVEKDSMDKQKALDAALSQIERAFGKGSIMKLGARENLVETEVISTGSLGLDIALGIGGLPKGRIVEIYGPESSGKTTLALHAIAQAQKAGGTCAFVDAEHALDPSYARKLGVNIDELLISQPDAGEQALEIADTLVRSGAIDVLVVDSVAALVPRAELEGEMGDSHVGLHARLMSQALRKLTGSISKSNCLVIFINQIRLKIGVMFGNPETTTGGNALKFYASVRLDIRRIGSIKDRDTVVGNQTRVKVVKNKMAPPFRVVEFDIMYGEGVSKVGELLDLGIQAGVVDKSGAWFSYDGTRIGQGRENAKTYLRNNPEMADAIEAKIRGNAGLVADAMMGTPEADGEASTPE.

77–84 (GPESSGKT) serves as a coordination point for ATP.

The protein belongs to the RecA family.

The protein resides in the cytoplasm. Can catalyze the hydrolysis of ATP in the presence of single-stranded DNA, the ATP-dependent uptake of single-stranded DNA by duplex DNA, and the ATP-dependent hybridization of homologous single-stranded DNAs. It interacts with LexA causing its activation and leading to its autocatalytic cleavage. This Azospirillum lipoferum (strain 4B) protein is Protein RecA.